Reading from the N-terminus, the 241-residue chain is Lipopolysaccharide export system ATP-binding protein LptB (241 aa).

The ABC transporter domain occupies 5–237; sequence LQAQSLFKSY…PMVRQVYLGD (233 aa). 37 to 44 is a binding site for ATP; the sequence is GPNGAGKT.

The protein belongs to the ABC transporter superfamily. Outer membrane lipopolysaccharide export (TC 1.B.42) family. Component of the lipopolysaccharide transport and assembly complex. The LptBFG transporter is composed of two ATP-binding proteins (LptB) and two transmembrane proteins (LptF and LptG).

Its subcellular location is the cytoplasm. It is found in the cell inner membrane. Its function is as follows. Part of the ABC transporter complex LptBFG involved in the translocation of lipopolysaccharide (LPS) from the inner membrane to the outer membrane. Probably responsible for energy coupling to the transport system. This Acidithiobacillus ferridurans protein is Lipopolysaccharide export system ATP-binding protein LptB (lptB).